Here is a 156-residue protein sequence, read N- to C-terminus: Endoribonuclease YbeY (156 aa).

Residues histidine 122, histidine 126, and histidine 132 each coordinate Zn(2+).

Belongs to the endoribonuclease YbeY family. Zn(2+) serves as cofactor.

It is found in the cytoplasm. Single strand-specific metallo-endoribonuclease involved in late-stage 70S ribosome quality control and in maturation of the 3' terminus of the 16S rRNA. The sequence is that of Endoribonuclease YbeY from Pediococcus pentosaceus (strain ATCC 25745 / CCUG 21536 / LMG 10740 / 183-1w).